Here is a 1307-residue protein sequence, read N- to C-terminus: Rab3 GTPase-activating protein regulatory subunit (1307 aa).

This sequence belongs to the Rab3-GAP regulatory subunit family. The Rab3 GTPase-activating complex is a heterodimer composed of rbg-1 and rbg-2.

Its subcellular location is the cytoplasm. Functionally, probable regulatory subunit of a GTPase activating protein that has specificity for Rab3 subfamily. Rab3 proteins are involved in regulated exocytosis of neurotransmitters and hormones. Rab3 GTPase-activating complex specifically converts active Rab3-GTP to the inactive form Rab3-GDP. The chain is Rab3 GTPase-activating protein regulatory subunit (rbg-2) from Caenorhabditis elegans.